We begin with the raw amino-acid sequence, 377 residues long: Queuine tRNA-ribosyltransferase (377 aa).

The active-site Proton acceptor is the Asp89. Residues 89–93 (DSGGF), Asp143, Gln187, and Gly214 contribute to the substrate site. Residues 245–251 (GVGKPED) form an RNA binding region. Asp264 serves as the catalytic Nucleophile. Residues 269 to 273 (TRNAR) form an RNA binding; important for wobble base 34 recognition region. The Zn(2+) site is built by Cys302, Cys304, Cys307, and His333.

It belongs to the queuine tRNA-ribosyltransferase family. Homodimer. Within each dimer, one monomer is responsible for RNA recognition and catalysis, while the other monomer binds to the replacement base PreQ1. It depends on Zn(2+) as a cofactor.

It catalyses the reaction 7-aminomethyl-7-carbaguanine + guanosine(34) in tRNA = 7-aminomethyl-7-carbaguanosine(34) in tRNA + guanine. It participates in tRNA modification; tRNA-queuosine biosynthesis. In terms of biological role, catalyzes the base-exchange of a guanine (G) residue with the queuine precursor 7-aminomethyl-7-deazaguanine (PreQ1) at position 34 (anticodon wobble position) in tRNAs with GU(N) anticodons (tRNA-Asp, -Asn, -His and -Tyr). Catalysis occurs through a double-displacement mechanism. The nucleophile active site attacks the C1' of nucleotide 34 to detach the guanine base from the RNA, forming a covalent enzyme-RNA intermediate. The proton acceptor active site deprotonates the incoming PreQ1, allowing a nucleophilic attack on the C1' of the ribose to form the product. After dissociation, two additional enzymatic reactions on the tRNA convert PreQ1 to queuine (Q), resulting in the hypermodified nucleoside queuosine (7-(((4,5-cis-dihydroxy-2-cyclopenten-1-yl)amino)methyl)-7-deazaguanosine). This chain is Queuine tRNA-ribosyltransferase, found in Shewanella denitrificans (strain OS217 / ATCC BAA-1090 / DSM 15013).